Reading from the N-terminus, the 817-residue chain is Disks large homolog 3 (817 aa).

N-acetylmethionine is present on residues M1 and H2. The tract at residues 33 to 101 (WQVPDPYGPG…GKSTPKLNGS (69 aa)) is disordered. A compositionally biased stretch (gly residues) spans 40–53 (GPGGGNGASAGYGG). Over residues 57–69 (QTLPSQAGATPTP) the composition is skewed to polar residues. PDZ domains are found at residues 130–217 (EEIV…VRRR), 226–311 (EVNL…KVAK), and 379–465 (DFTR…VAQY). S139 carries the post-translational modification Phosphoserine. The region spanning 501–571 (KRSLYVRALF…PSKKRVEKKE (71 aa)) is the SH3 domain. The region spanning 627–802 (ARPVIILGPM…IYNKIKQIIE (176 aa)) is the Guanylate kinase-like domain. A Phosphotyrosine modification is found at Y673.

The protein belongs to the MAGUK family. In terms of assembly, interacts through its PDZ domains with NETO1, GRIN2B and SYNGAP1. Interacts through its guanylate kinase-like domain with DLGAP1, DLGAP2, DLGAP3 and DLGAP4. Interacts with FLTP/C1orf192. Interacts through its PDZ domains with APC. Interacts through its first two PDZ domains with ERBB4. Interacts through its third PDZ domain with NLGN1, and probably with NLGN2 and NLGN3. Interacts with FRMPD4 (via C-terminus). Interacts with LRFN1, LRFN2 and LRFN4. Interacts with DGKI (via PDZ-binding motif).

Its function is as follows. Required for learning most likely through its role in synaptic plasticity following NMDA receptor signaling. This Homo sapiens (Human) protein is Disks large homolog 3 (DLG3).